Reading from the N-terminus, the 70-residue chain is Large ribosomal subunit protein eL38 (70 aa).

Belongs to the eukaryotic ribosomal protein eL38 family.

The polypeptide is Large ribosomal subunit protein eL38 (RpL38) (Aedes aegypti (Yellowfever mosquito)).